A 562-amino-acid chain; its full sequence is Arginine--tRNA ligase (562 aa).

The 'HIGH' region signature appears at 121–131 (PNIAKPFSVGH).

This sequence belongs to the class-I aminoacyl-tRNA synthetase family. As to quaternary structure, monomer.

The protein localises to the cytoplasm. It carries out the reaction tRNA(Arg) + L-arginine + ATP = L-arginyl-tRNA(Arg) + AMP + diphosphate. This Streptococcus suis (strain 98HAH33) protein is Arginine--tRNA ligase.